Reading from the N-terminus, the 901-residue chain is Probable inorganic carbon transporter subunit DabA (901 aa).

The Zn(2+) site is built by cysteine 424, aspartate 426, histidine 606, and cysteine 621.

Belongs to the inorganic carbon transporter (TC 9.A.2) DabA family. Forms a complex with DabB. Requires Zn(2+) as cofactor.

The protein localises to the cell membrane. Its function is as follows. Part of an energy-coupled inorganic carbon pump. This chain is Probable inorganic carbon transporter subunit DabA, found in Staphylococcus aureus (strain MRSA252).